The following is a 600-amino-acid chain: Copine-A (600 aa).

C2 domains follow at residues 1-111 and 116-246; these read MNLK…TVCL and KSGK…NVIN. The Ca(2+) site is built by D23, D29, D82, D84, D89, D151, D158, D215, D217, and D223. A VWFA domain is found at 286 to 503; that stretch reads NLIVGIDCTA…ELAAEVLREI (218 aa). Positions 535–549 are enriched in low complexity; it reads YDNPTTTTTATSPST. Positions 535–583 are disordered; sequence YDNPTTTTTATSPSTGIDLNKGSNVGLNLTKTESSPSPSGGAGIDLNKG. Residues 555–572 are compositionally biased toward polar residues; the sequence is KGSNVGLNLTKTESSPSP.

This sequence belongs to the copine family. Ca(2+) is required as a cofactor.

The protein localises to the cytoplasm. It is found in the membrane. Functionally, required for cytokinesis, contractile vacuole function and development. This chain is Copine-A (cpnA), found in Dictyostelium discoideum (Social amoeba).